The sequence spans 461 residues: D-phenylhydantoinase (461 aa).

A divalent metal cation is bound by residues H59, H61, and K151. K151 carries the post-translational modification N6-carboxylysine. Y156 contributes to the substrate binding site. H182 and H239 together coordinate a divalent metal cation. S286 contacts substrate. An a divalent metal cation-binding site is contributed by D313. N335 contacts substrate.

It belongs to the metallo-dependent hydrolases superfamily. Hydantoinase/dihydropyrimidinase family. In terms of assembly, homotetramer. Requires a divalent metal cation as cofactor. In terms of processing, carboxylation allows a single lysine to coordinate two divalent metal cations.

It catalyses the reaction D-5-phenylhydantoin + H2O = N-carbamoyl-D-phenylglycine + H(+). In terms of biological role, catalyzes the stereospecific hydrolysis of the cyclic amide bond of D-hydantoin derivatives with an aromatic side chains at the 5'-position. Has no activity on dihydropyrimidines. The physiological function is unknown. The protein is D-phenylhydantoinase of Escherichia coli O9:H4 (strain HS).